Here is a 538-residue protein sequence, read N- to C-terminus: MALPYHIFLFTVLLPSFTLTAPPPCRCMTSSSPYQEFLWRMHHPGNIDAPSYRSFSKGTPTFTAHTHMPRNCYNSATLCMHGNTHYWTGKMINPSCPGGLGVTVCWTYFTHTGMSDGGGVQDEAREKHVKEVISQLTQVHSTSSPYKGLDLSKLHETLRTHTRLVSLFNTTLTGLHEVSAQNPTNCWMCLPLAFRPYVSIPVPEQWNNFSTEINTTSVLVGPLVSNLEITHTSNLTCVKFSNTTNTTNSQCIRWVTPPTQVVCLPSGIFFVCGTSAYRCLNGSSESMCFLSFLVPPMTIYTEQDLYNYVVSKPRNKRVPILPFVMAAGVLGALGTGIGGITTSTQFYYKLSQELNGDMERVADSLVTLQDQLNSIAAVVLQNRRALDLLTAERGGTCLFLGEECCYYVNQSGIVTEKVKEIRDRIQRRAEELRNIGPWGLFSQWMPWILPFLGPLAAIILLLLFGPCIFNLLVNFVSSRIEAVKLQMEPKMQSKTKIYHRPLDWPASPRSDVNDIKGTPPEEISTAQPLLRPNSAGSS.

The signal sequence occupies residues 1–20 (MALPYHIFLFTVLLPSFTLT). Residues 21-443 (APPPCRCMTS…NIGPWGLFSQ (423 aa)) lie on the Extracellular side of the membrane. Asn169 carries an N-linked (GlcNAc...) asparagine glycan. A CXXC motif is present at residues 186–189 (CWMC). Cystine bridges form between Cys186–Cys189, Cys186–Cys405, and Cys397–Cys404. Residues Asn208, Asn214, Asn234, Asn242, Asn245, and Asn281 are each glycosylated (N-linked (GlcNAc...) asparagine). Residues 320-340 (ILPFVMAAGVLGALGTGIGGI) form a fusion peptide region. The tract at residues 380 to 396 (LQNRRALDLLTAERGGT) is immunosuppression. The CX6CC signature appears at 397-405 (CLFLGEECC). Asn409 carries N-linked (GlcNAc...) asparagine glycosylation. The helical transmembrane segment at 444–464 (WMPWILPFLGPLAAIILLLLF) threads the bilayer. Residues 465–484 (GPCIFNLLVNFVSSRIEAVK) form an essential for the fusiogenic function region. The Cytoplasmic segment spans residues 465 to 538 (GPCIFNLLVN…LLRPNSAGSS (74 aa)). The disordered stretch occupies residues 501 to 538 (PLDWPASPRSDVNDIKGTPPEEISTAQPLLRPNSAGSS).

Belongs to the gamma type-C retroviral envelope protein family. HERV class-I W env subfamily. In terms of assembly, the mature envelope protein (Env) consists of a trimer of SU-TM heterodimers attached probably by a labile interchain disulfide bond. Interacts with the C-type lectin CD209/DC-SIGN. Specific enzymatic cleavages in vivo yield mature proteins. Envelope glycoproteins are synthesized as an inactive precursor that is heavily N-glycosylated and processed likely by furin in the Golgi to yield the mature SU and TM proteins. The cleavage site between SU and TM requires the minimal sequence [KR]-X-[KR]-R. Post-translationally, the CXXC motif is highly conserved across a broad range of retroviral envelope proteins. It is thought to participate in the formation of a labile disulfide bond possibly with the CX6CC motif present in the transmembrane protein.

Its subcellular location is the cell membrane. The protein localises to the virion. Its function is as follows. This endogenous retroviral envelope protein has retained its original fusogenic properties and participates in trophoblast fusion and the formation of a syncytium during placenta morphogenesis. May recognize and induce fusion through binding of SLC1A4 and SLC1A5. Functionally, endogenous envelope proteins may have kept, lost or modified their original function during evolution. Retroviral envelope proteins mediate receptor recognition and membrane fusion during early infection. The surface protein (SU) mediates receptor recognition, while the transmembrane protein (TM) acts as a class I viral fusion protein. The protein may have at least 3 conformational states: pre-fusion native state, pre-hairpin intermediate state, and post-fusion hairpin state. During viral and target cell membrane fusion, the coiled coil regions (heptad repeats) assume a trimer-of-hairpins structure, positioning the fusion peptide in close proximity to the C-terminal region of the ectodomain. The formation of this structure appears to drive apposition and subsequent fusion of membranes. The protein is Syncytin-1 (ERVW-1) of Pongo pygmaeus (Bornean orangutan).